Consider the following 329-residue polypeptide: Sex comb on midleg-like protein 1 (329 aa).

Serine 138 and serine 238 each carry phosphoserine. Residues 138–157 (SPTLPVSRRENNSPSNLPRP) are disordered. The region spanning 258–325 (WSVEAVVLFL…YYIDRLKQGK (68 aa)) is the SAM domain.

This sequence belongs to the SCM family.

The protein localises to the nucleus. In terms of biological role, putative Polycomb group (PcG) protein. PcG proteins act by forming multiprotein complexes, which are required to maintain the transcriptionally repressive state of homeotic genes throughout development. May be involved in spermatogenesis during sexual maturation. The sequence is that of Sex comb on midleg-like protein 1 (SCML1) from Gorilla gorilla gorilla (Western lowland gorilla).